We begin with the raw amino-acid sequence, 383 residues long: Putative 8-amino-7-oxononanoate synthase (383 aa).

A substrate-binding site is contributed by Arg22. 109 to 110 (GY) contacts pyridoxal 5'-phosphate. Residue His134 coordinates substrate. Pyridoxal 5'-phosphate-binding positions include Ser182, 207–210 (DDAH), and 236–239 (TLSK). Lys239 carries the post-translational modification N6-(pyridoxal phosphate)lysine. Thr348 provides a ligand contact to substrate.

This sequence belongs to the class-II pyridoxal-phosphate-dependent aminotransferase family. BioF subfamily. Homodimer. Pyridoxal 5'-phosphate is required as a cofactor.

It carries out the reaction 6-carboxyhexanoyl-[ACP] + L-alanine + H(+) = (8S)-8-amino-7-oxononanoate + holo-[ACP] + CO2. It functions in the pathway cofactor biosynthesis; biotin biosynthesis. In terms of biological role, catalyzes the decarboxylative condensation of pimeloyl-[acyl-carrier protein] and L-alanine to produce 8-amino-7-oxononanoate (AON), [acyl-carrier protein], and carbon dioxide. In Caulobacter sp. (strain K31), this protein is Putative 8-amino-7-oxononanoate synthase (bioF).